The sequence spans 130 residues: Small ribosomal subunit protein uS9 (130 aa).

It belongs to the universal ribosomal protein uS9 family.

This Bacillus licheniformis (strain ATCC 14580 / DSM 13 / JCM 2505 / CCUG 7422 / NBRC 12200 / NCIMB 9375 / NCTC 10341 / NRRL NRS-1264 / Gibson 46) protein is Small ribosomal subunit protein uS9.